Reading from the N-terminus, the 738-residue chain is Photosystem I P700 chlorophyll a apoprotein A2 (738 aa).

The next 8 membrane-spanning stretches (helical) occupy residues 46–69, 135–158, 175–199, 273–291, 333–356, 372–398, 420–442, and 521–539; these read LFSTHFGHLAIIGLWVSGNLFHIA, LYQGSIFMMILSAWALFAGWLHLQ, LNHHLAVLFGFSSIAWTGHLVHVAI, IAHHHLAIGVIFVIAGHMY, LHFQLGLALASLGVVTSLVAQHMY, AALYTHHQYIAIFLMCGAFAHGAIFFI, AIISHLSWVSLFLGFHTLGLYVH, and FLVHHAIALGLHTTTLILV. [4Fe-4S] cluster is bound by residues Cys563 and Cys572. Helical transmembrane passes span 579–600 and 647–669; these read AFYLAVFWALNTVGWVTFYWHW and LAVWAWMFLFGHLVWATGFMFLI. Residues His658, Met666, and Tyr674 each contribute to the chlorophyll a site. Residue Trp675 coordinates phylloquinone. Residues 711-731 traverse the membrane as a helical segment; that stretch reads VVGLAHFTIGYILTYAAFLIA.

This sequence belongs to the PsaA/PsaB family. As to quaternary structure, the PsaA/B heterodimer binds the P700 chlorophyll special pair and subsequent electron acceptors. PSI consists of a core antenna complex that captures photons, and an electron transfer chain that converts photonic excitation into a charge separation. The cyanobacterial PSI reaction center is composed of one copy each of PsaA,B,C,D,E,F,I,J,K,L,M and X, and forms trimeric complexes. Requires PSI electron transfer chain: 5 chlorophyll a, 1 chlorophyll a', 2 phylloquinones and 3 4Fe-4S clusters. PSI core antenna: 90 chlorophyll a, 22 carotenoids, 3 phospholipids and 1 galactolipid. P700 is a chlorophyll a/chlorophyll a' dimer, A0 is one or more chlorophyll a, A1 is one or both phylloquinones and FX is a shared 4Fe-4S iron-sulfur center. as cofactor.

The protein resides in the cellular thylakoid membrane. It catalyses the reaction reduced [plastocyanin] + hnu + oxidized [2Fe-2S]-[ferredoxin] = oxidized [plastocyanin] + reduced [2Fe-2S]-[ferredoxin]. Its function is as follows. PsaA and PsaB bind P700, the primary electron donor of photosystem I (PSI), as well as the electron acceptors A0, A1 and FX. PSI is a plastocyanin/cytochrome c6-ferredoxin oxidoreductase, converting photonic excitation into a charge separation, which transfers an electron from the donor P700 chlorophyll pair to the spectroscopically characterized acceptors A0, A1, FX, FA and FB in turn. Oxidized P700 is reduced on the lumenal side of the thylakoid membrane by plastocyanin or cytochrome c6. The sequence is that of Photosystem I P700 chlorophyll a apoprotein A2 from Synechococcus sp. (strain WH7803).